The primary structure comprises 472 residues: Eukaryotic translation initiation factor 2 subunit 3, Y-linked (472 aa).

An N-acetylalanine modification is found at A2. Phosphoserine is present on S16. Residues 39–247 (QATINIGTIG…YIVKKIPVPL (209 aa)) enclose the tr-type G domain. A G1 region spans residues 48–55 (GHVAHGKS). 51 to 56 (AHGKST) contributes to the GTP binding site. The G2 stretch occupies residues 76-80 (NITIK). The segment at 134-137 (DCPG) is G3. GTP is bound by residues 190-193 (NKID) and 225-227 (SAQ). The tract at residues 190-193 (NKID) is G4. A G5 region spans residues 225 to 227 (SAQ).

The protein belongs to the TRAFAC class translation factor GTPase superfamily. Classic translation factor GTPase family. EIF2G subfamily. As to quaternary structure, eIF2 is a heterotrimer composed of an alpha (EIF2S1), a beta (EIF2S2) and a gamma (Eif2s3x and Eif2s3y) chain. eIF2 is member of the 43S pre-initiation complex (43S PIC). In terms of tissue distribution, widely expressed in males.

The catalysed reaction is GTP + H2O = GDP + phosphate + H(+). Its function is as follows. Member of the eIF2 complex that functions in the early steps of protein synthesis by forming a ternary complex with GTP and initiator tRNA. This complex binds to a 40S ribosomal subunit, followed by mRNA binding to form the 43S pre-initiation complex (43S PIC). Junction of the 60S ribosomal subunit to form the 80S initiation complex is preceded by hydrolysis of the GTP bound to eIF2 and release of an eIF2-GDP binary complex. In order for eIF2 to recycle and catalyze another round of initiation, the GDP bound to eIF2 must exchange with GTP by way of a reaction catalyzed by eIF-2B. Along with its paralog on chromosome X, may contribute to spermatogenesis up to the round spermatid stage. The chain is Eukaryotic translation initiation factor 2 subunit 3, Y-linked (Eif2s3y) from Rattus norvegicus (Rat).